A 603-amino-acid polypeptide reads, in one-letter code: Linalool synthase Tps-5031L19, chloroplastic (603 aa).

Residues 1–36 (MSSMRTYVAIMKKPSVEHVDNVDKKASKPSWRVSLS) constitute a chloroplast transit peptide. (2E)-geranyl diphosphate is bound by residues Arg-322, Asp-359, Asp-363, Arg-500, and Asp-503. Mg(2+) is bound by residues Asp-359 and Asp-363. The DDXXD motif signature appears at 359–363 (DDVYD). Residues Asp-503, Thr-507, and Glu-511 each contribute to the Mg(2+) site.

It belongs to the terpene synthase family. Tpsb subfamily. In terms of assembly, monomer. Mg(2+) is required as a cofactor. The cofactor is Mn(2+).

The protein resides in the plastid. It localises to the chloroplast. It carries out the reaction (2E)-geranyl diphosphate + H2O = linalool + diphosphate. Its pathway is secondary metabolite biosynthesis; terpenoid biosynthesis. In terms of biological role, monoterpene synthase (mono-TPS) involved in the biosynthesis of monoterpenes natural products. Catalyzes the conversion of (2E)-geranyl diphosphate (GPP) into linalool. This Perilla frutescens var. hirtella (Perilla citriodora) protein is Linalool synthase Tps-5031L19, chloroplastic.